The primary structure comprises 483 residues: Aspartyl/glutamyl-tRNA(Asn/Gln) amidotransferase subunit B (483 aa).

It belongs to the GatB/GatE family. GatB subfamily. Heterotrimer of A, B and C subunits.

It catalyses the reaction L-glutamyl-tRNA(Gln) + L-glutamine + ATP + H2O = L-glutaminyl-tRNA(Gln) + L-glutamate + ADP + phosphate + H(+). The catalysed reaction is L-aspartyl-tRNA(Asn) + L-glutamine + ATP + H2O = L-asparaginyl-tRNA(Asn) + L-glutamate + ADP + phosphate + 2 H(+). Its function is as follows. Allows the formation of correctly charged Asn-tRNA(Asn) or Gln-tRNA(Gln) through the transamidation of misacylated Asp-tRNA(Asn) or Glu-tRNA(Gln) in organisms which lack either or both of asparaginyl-tRNA or glutaminyl-tRNA synthetases. The reaction takes place in the presence of glutamine and ATP through an activated phospho-Asp-tRNA(Asn) or phospho-Glu-tRNA(Gln). This is Aspartyl/glutamyl-tRNA(Asn/Gln) amidotransferase subunit B from Rickettsia canadensis (strain McKiel).